Consider the following 156-residue polypeptide: ATP synthase subunit b (156 aa).

A helical transmembrane segment spans residues Leu7–Pro27.

The protein belongs to the ATPase B chain family. In terms of assembly, F-type ATPases have 2 components, F(1) - the catalytic core - and F(0) - the membrane proton channel. F(1) has five subunits: alpha(3), beta(3), gamma(1), delta(1), epsilon(1). F(0) has four main subunits: a(1), b(2) and c(10-14). The alpha and beta chains form an alternating ring which encloses part of the gamma chain. F(1) is attached to F(0) by a central stalk formed by the gamma and epsilon chains, while a peripheral stalk is formed by the delta and b chains.

The protein resides in the cell inner membrane. Its function is as follows. F(1)F(0) ATP synthase produces ATP from ADP in the presence of a proton or sodium gradient. F-type ATPases consist of two structural domains, F(1) containing the extramembraneous catalytic core and F(0) containing the membrane proton channel, linked together by a central stalk and a peripheral stalk. During catalysis, ATP synthesis in the catalytic domain of F(1) is coupled via a rotary mechanism of the central stalk subunits to proton translocation. Component of the F(0) channel, it forms part of the peripheral stalk, linking F(1) to F(0). The chain is ATP synthase subunit b from Methylibium petroleiphilum (strain ATCC BAA-1232 / LMG 22953 / PM1).